We begin with the raw amino-acid sequence, 154 residues long: Myoglobin (154 aa).

One can recognise a Globin domain in the interval 2–148; sequence GLSDGEWQIV…FRNDIAAKYK (147 aa). Serine 4 carries the post-translational modification Phosphoserine. Nitrite is bound at residue histidine 65. An O2-binding site is contributed by histidine 65. Threonine 68 bears the Phosphothreonine mark. Histidine 94 serves as a coordination point for heme b.

It belongs to the globin family. As to quaternary structure, monomeric.

It is found in the cytoplasm. The protein resides in the sarcoplasm. It catalyses the reaction Fe(III)-heme b-[protein] + nitric oxide + H2O = Fe(II)-heme b-[protein] + nitrite + 2 H(+). The enzyme catalyses H2O2 + AH2 = A + 2 H2O. Functionally, monomeric heme protein which primary function is to store oxygen and facilitate its diffusion within muscle tissues. Reversibly binds oxygen through a pentacoordinated heme iron and enables its timely and efficient release as needed during periods of heightened demand. Depending on the oxidative conditions of tissues and cells, and in addition to its ability to bind oxygen, it also has a nitrite reductase activity whereby it regulates the production of bioactive nitric oxide. Under stress conditions, like hypoxia and anoxia, it also protects cells against reactive oxygen species thanks to its pseudoperoxidase activity. This Lycaon pictus (African wild dog) protein is Myoglobin (MB).